The chain runs to 81 residues: Cytotoxin 2 (81 aa).

The signal sequence occupies residues 1-21; sequence MKTLLLTLVVVTIVCLDLGYT. Cystine bridges form between C24–C42, C35–C59, C63–C74, and C75–C80.

This sequence belongs to the three-finger toxin family. Short-chain subfamily. Type IA cytotoxin sub-subfamily. Monomer in solution; Homodimer and oligomer in the presence of negatively charged lipids forming a pore with a size ranging between 20 and 30 Angstroms. As to expression, expressed by the venom gland.

It is found in the secreted. The protein localises to the target cell membrane. Its function is as follows. Shows cytolytic activity on many different cells by forming pore in lipid membranes. In vivo, increases heart rate or kills the animal by cardiac arrest. In addition, it binds to heparin with high affinity, interacts with Kv channel-interacting protein 1 (KCNIP1) in a calcium-independent manner, and binds to integrin alpha-V/beta-3 (ITGAV/ITGB3) with moderate affinity. This chain is Cytotoxin 2, found in Naja kaouthia (Monocled cobra).